We begin with the raw amino-acid sequence, 249 residues long: 2,3-bisphosphoglycerate-dependent phosphoglycerate mutase (249 aa).

Residues 9 to 16 (RHGQSQWN), 22 to 23 (TG), Arg-61, 88 to 91 (ERHY), Lys-99, 115 to 116 (RR), and 184 to 185 (GN) each bind substrate. His-10 acts as the Tele-phosphohistidine intermediate in catalysis. Residue Glu-88 is the Proton donor/acceptor of the active site.

The protein belongs to the phosphoglycerate mutase family. BPG-dependent PGAM subfamily. In terms of assembly, homodimer.

The catalysed reaction is (2R)-2-phosphoglycerate = (2R)-3-phosphoglycerate. It participates in carbohydrate degradation; glycolysis; pyruvate from D-glyceraldehyde 3-phosphate: step 3/5. In terms of biological role, catalyzes the interconversion of 2-phosphoglycerate and 3-phosphoglycerate. This is 2,3-bisphosphoglycerate-dependent phosphoglycerate mutase from Xanthomonas axonopodis pv. citri (strain 306).